A 454-amino-acid polypeptide reads, in one-letter code: CBL-interacting protein kinase 4 (454 aa).

The Protein kinase domain occupies 25 to 284; sequence YELGRMLGRG…ESLAAHHPWF (260 aa). ATP contacts are provided by residues 31–39 and Lys-54; that span reads LGRGTFAKV. Asp-151 functions as the Proton acceptor in the catalytic mechanism. The tract at residues 169 to 198 is activation loop; sequence DFGLAALPDTLRDDGRLHTACGTPAYAAPE. Positions 311 to 335 constitute an NAF domain; sequence APPPPLNAFDIISMSPGLDLSGLFG. Residues 341 to 370 form a PPI region; that stretch reads LREKRFTTTASPEKTLEQLGLAGGKLGYVV.

The protein belongs to the protein kinase superfamily. CAMK Ser/Thr protein kinase family. SNF1 subfamily. Mn(2+) serves as cofactor.

The enzyme catalyses L-seryl-[protein] + ATP = O-phospho-L-seryl-[protein] + ADP + H(+). It catalyses the reaction L-threonyl-[protein] + ATP = O-phospho-L-threonyl-[protein] + ADP + H(+). In terms of biological role, CIPK serine-threonine protein kinases interact with CBL proteins. Binding of a CBL protein to the regulatory NAF domain of CIPK protein lead to the activation of the kinase in a calcium-dependent manner. This is CBL-interacting protein kinase 4 (CIPK4) from Oryza sativa subsp. japonica (Rice).